The sequence spans 268 residues: Phosphatidylglycerol--prolipoprotein diacylglyceryl transferase (268 aa).

Helical transmembrane passes span 21-41 (WYGI…GRFA), 54-74 (FAII…VFVL), 93-113 (GLAI…YLPM), 122-142 (ADVV…GNFF), 173-193 (VMHP…GILL), 203-223 (GVVF…IESI), and 236-256 (VAQL…AWFL). Arginine 137 provides a ligand contact to a 1,2-diacyl-sn-glycero-3-phospho-(1'-sn-glycerol).

The protein belongs to the Lgt family.

The protein localises to the cell membrane. The catalysed reaction is L-cysteinyl-[prolipoprotein] + a 1,2-diacyl-sn-glycero-3-phospho-(1'-sn-glycerol) = an S-1,2-diacyl-sn-glyceryl-L-cysteinyl-[prolipoprotein] + sn-glycerol 1-phosphate + H(+). The protein operates within protein modification; lipoprotein biosynthesis (diacylglyceryl transfer). In terms of biological role, catalyzes the transfer of the diacylglyceryl group from phosphatidylglycerol to the sulfhydryl group of the N-terminal cysteine of a prolipoprotein, the first step in the formation of mature lipoproteins. The protein is Phosphatidylglycerol--prolipoprotein diacylglyceryl transferase of Symbiobacterium thermophilum (strain DSM 24528 / JCM 14929 / IAM 14863 / T).